A 226-amino-acid polypeptide reads, in one-letter code: MAPAKGSSLTPIQVENLQFPASVTSPATAKSYFLGGAGERGLTIEGKFIKFTGIGVYLEDTAVDSLATKWKGKSSQELQDSLDFFRDIISSPSEKLIRGSKLRPLSGVEYSRKVMENCVAHMKSAGTYGEAEATAIEKFAEAFRKVDFPPGSSVFYRQSTDGKLGLSFSLDDTIPEEEAVVIENKALSEAVLETMIGEHAVSPDLKRCLAERLPIVMNQGLLLTGN.

Substrate-binding residues include Thr-52, Asn-117, and Thr-194.

Belongs to the chalcone isomerase family.

It carries out the reaction a chalcone = a flavanone.. Its pathway is secondary metabolite biosynthesis; flavonoid biosynthesis. Functionally, catalyzes the intramolecular cyclization of bicyclic chalcones into tricyclic (S)-flavanones. Responsible for the isomerization of 4,2',4',6'-tetrahydroxychalcone (also termed chalcone) into naringenin. The polypeptide is Chalcone--flavanone isomerase 1 (CHI1) (Lotus japonicus (Lotus corniculatus var. japonicus)).